The following is a 177-amino-acid chain: Cyclic pyranopterin monophosphate synthase (177 aa).

Substrate contacts are provided by residues 89 to 91 (LCH) and 125 to 126 (ME). The active site involves aspartate 140.

This sequence belongs to the MoaC family. In terms of assembly, homohexamer; trimer of dimers.

The catalysed reaction is (8S)-3',8-cyclo-7,8-dihydroguanosine 5'-triphosphate = cyclic pyranopterin phosphate + diphosphate. It participates in cofactor biosynthesis; molybdopterin biosynthesis. Catalyzes the conversion of (8S)-3',8-cyclo-7,8-dihydroguanosine 5'-triphosphate to cyclic pyranopterin monophosphate (cPMP). This chain is Cyclic pyranopterin monophosphate synthase, found in Streptomyces griseus subsp. griseus (strain JCM 4626 / CBS 651.72 / NBRC 13350 / KCC S-0626 / ISP 5235).